A 94-amino-acid polypeptide reads, in one-letter code: uncharacterized protein (94 aa).

This is an uncharacterized protein from Schizosaccharomyces pombe (strain 972 / ATCC 24843) (Fission yeast).